Consider the following 250-residue polypeptide: DNA polymerase sliding clamp (250 aa).

The protein belongs to the PCNA family. In terms of assembly, homotrimer. The subunits circularize to form a toroid; DNA passes through its center. Replication factor C (RFC) is required to load the toroid on the DNA.

Functionally, sliding clamp subunit that acts as a moving platform for DNA processing. Responsible for tethering the catalytic subunit of DNA polymerase and other proteins to DNA during high-speed replication. The chain is DNA polymerase sliding clamp from Methanococcus maripaludis (strain C6 / ATCC BAA-1332).